A 627-amino-acid polypeptide reads, in one-letter code: F-box only protein 21 (627 aa).

The 50-residue stretch at proline 27–glutamine 76 folds into the F-box domain.

As to quaternary structure, directly interacts with SKP1 and CUL1.

Substrate-recognition component of the SCF (SKP1-CUL1-F-box protein)-type E3 ubiquitin ligase complex. This Mus musculus (Mouse) protein is F-box only protein 21 (Fbxo21).